Consider the following 89-residue polypeptide: Small ribosomal subunit protein uS15 (89 aa).

It belongs to the universal ribosomal protein uS15 family. As to quaternary structure, part of the 30S ribosomal subunit. Forms a bridge to the 50S subunit in the 70S ribosome, contacting the 23S rRNA.

Its function is as follows. One of the primary rRNA binding proteins, it binds directly to 16S rRNA where it helps nucleate assembly of the platform of the 30S subunit by binding and bridging several RNA helices of the 16S rRNA. Functionally, forms an intersubunit bridge (bridge B4) with the 23S rRNA of the 50S subunit in the ribosome. The polypeptide is Small ribosomal subunit protein uS15 (Acidithiobacillus ferrooxidans (strain ATCC 23270 / DSM 14882 / CIP 104768 / NCIMB 8455) (Ferrobacillus ferrooxidans (strain ATCC 23270))).